An 801-amino-acid polypeptide reads, in one-letter code: Heavy metal tolerance factor 1 (801 aa).

Over 1–24 (MGFSPFLDECRAEGLWPIGPSCNK) the chain is Lumenal. Residues 25 to 45 (IISFGVYTFFIVVNFIVLCIP) form a helical membrane-spanning segment. The Cytoplasmic portion of the chain corresponds to 46–75 (NSNSANNNYRRMTDDDASSTSKLTISKILS). A helical transmembrane segment spans residues 76–96 (ICTIFAVICQSIFYFCFTFYF). At 97 to 101 (HPYTH) the chain is on the lumenal side. Residues 102–122 (LLLAFCVSKLFFWILSLCSFS) form a helical membrane-spanning segment. Over 123 to 129 (KWRNQPS) the chain is Cytoplasmic. The helical transmembrane segment at 130–150 (TPISLAFAFSAALLIHCIPLT) threads the bilayer. Residues 151–167 (DWKKYFEPTSKNRGDLT) lie on the Lumenal side of the membrane. A helical membrane pass occupies residues 168-188 (FYIIELALVTVVFFFTIVTGL). Over 189–226 (FNFSGCSSRESAWNNLSKKVVTVAPYIWPTKSISLQLR) the chain is Cytoplasmic. Residues 227 to 247 (VVFCLFLLIIGRLINVSLPIL) traverse the membrane as a helical segment. Residues 227–516 (VVFCLFLLII…FGTIYRVIQK (290 aa)) form the ABC transmembrane type-1 domain. Topologically, residues 248–264 (SKWIVDELATPDTFQYS) are lumenal. A helical membrane pass occupies residues 265–285 (LLFLATFLKFLQGNGAMGGFL). The Cytoplasmic portion of the chain corresponds to 286–341 (NTVRTYLWIPIQQYTTRELEVELFKHLHSLSLRWHLSRKTGQVLRVMDRGTSSVNN). Residues 342-364 (ILNYILFNVVPTIADIVIAVIFF) traverse the membrane as a helical segment. At 365–371 (FSAFNAY) the chain is on the lumenal side. Residues 372–390 (FGLIVFGTMALYLTVTISI) form a helical membrane-spanning segment. Over 391–461 (TEWRTQYIRE…SLAFLNCLQN (71 aa)) the chain is Cytoplasmic. Residues 462 to 482 (AIIGIGMIGGSVFVVYMIVHE) form a helical membrane-spanning segment. Residues 483-489 (KTLTVGD) are Lumenal-facing. A helical transmembrane segment spans residues 490 to 510 (YVLFTTYLLQLYTPLNFFGTI). At 511–801 (YRVIQKAFVD…KSIELGEELP (291 aa)) the chain is on the cytoplasmic side. Positions 550 to 784 (ISVKNLTFEY…QGTYASMWEA (235 aa)) constitute an ABC transporter domain. An ATP-binding site is contributed by 583 to 590 (GSSGSGKS).

This sequence belongs to the ABC transporter superfamily. ABCB family. Heavy Metal importer (TC 3.A.1.210) subfamily. As to expression, expressed in coelomocytes, as well as in head and tail neurons, and in the intestinal cells.

It is found in the vacuole membrane. The protein localises to the early endosome. Its subcellular location is the late endosome. It localises to the recycling endosome. May play a pivotal role in the detoxification of heavy metals such as cadmium but do not depend exclusively on phytochelatins (PC) synthesis. The sequence is that of Heavy metal tolerance factor 1 from Caenorhabditis elegans.